The sequence spans 1357 residues: Protein CFT1 (1357 aa).

The disordered stretch occupies residues 445–465 (TREAHNPSSGTNSLMDINDDD). A compositionally biased stretch (polar residues) spans 450-459 (NPSSGTNSLM).

The protein belongs to the CFT1 family. As to quaternary structure, component of the cleavage and polyadenylation factor (CPF) complex, which is composed of at least PTI1, SYC1, SSU72, GLC7, MPE1, REF2, PFS2, PTA1, YSH1/BRR5, SWD2, CFT2/YDH1, YTH1, CFT1/YHH1, FIP1 and PAP1. Interacts with the phosphorylated CTD domain of RPB1/RNA polymerase II.

Its subcellular location is the nucleus. In terms of biological role, RNA-binding component of the cleavage and polyadenylation factor (CPF) complex, which plays a key role in polyadenylation-dependent pre-mRNA 3'-end formation and cooperates with cleavage factors including the CFIA complex and NAB4/CFIB. Involved in poly(A) site recognition. May be involved in coupling transcription termination and mRNA 3'-end formation. The chain is Protein CFT1 (CFT1) from Saccharomyces cerevisiae (strain ATCC 204508 / S288c) (Baker's yeast).